Reading from the N-terminus, the 158-residue chain is Phospholipase A2 AP-PLA2-II (158 aa).

The first 16 residues, 1-16 (MKTFLILAMAVALAKA), serve as a signal peptide directing secretion. The propeptide occupies 17-23 (QSTDEIT). Intrachain disulfides connect Cys-51/Cys-158, Cys-53/Cys-69, Cys-68/Cys-138, Cys-75/Cys-131, Cys-85/Cys-124, and Cys-109/Cys-129. The Ca(2+) site is built by Gly-54 and Gly-56. His-72 is a catalytic residue. A Ca(2+)-binding site is contributed by Asp-73. Residue Asp-132 is part of the active site.

It belongs to the phospholipase A2 family. Group I subfamily. As to quaternary structure, monomer. It depends on Ca(2+) as a cofactor. Expressed by the venom gland.

The protein localises to the secreted. It carries out the reaction a 1,2-diacyl-sn-glycero-3-phosphocholine + H2O = a 1-acyl-sn-glycero-3-phosphocholine + a fatty acid + H(+). Its function is as follows. Starfish phospholipase A2 (PLA2) that has hemorrhagic and capillary permeability-increasing activities and hence is considered to be deeply involved in the local inflammation. Shows hemolytic activity only in the presence of phosphatidylcholine (PC). PLA2 catalyzes the calcium-dependent hydrolysis of the 2-acyl groups in 3-sn-phosphoglycerides. The chain is Phospholipase A2 AP-PLA2-II from Acanthaster planci (Crown-of-thorns starfish).